A 208-amino-acid polypeptide reads, in one-letter code: Protein DEHYDRATION-INDUCED 19 homolog 6 (208 aa).

The disordered stretch occupies residues 151–190; it reads VDSPRRSEADAEGHGSSSSDDQKRREQGVMDDASKEELEE. Composition is skewed to basic and acidic residues over residues 153–163 and 170–190; these read SPRRSEADAEG and DDQKRREQGVMDDASKEELEE.

The protein belongs to the Di19 family.

This is Protein DEHYDRATION-INDUCED 19 homolog 6 (DI19-6) from Oryza sativa subsp. japonica (Rice).